The following is a 155-amino-acid chain: Large ribosomal subunit protein uL13 (155 aa).

Belongs to the universal ribosomal protein uL13 family. As to quaternary structure, part of the 50S ribosomal subunit.

In terms of biological role, this protein is one of the early assembly proteins of the 50S ribosomal subunit, although it is not seen to bind rRNA by itself. It is important during the early stages of 50S assembly. The chain is Large ribosomal subunit protein uL13 from Rickettsia akari (strain Hartford).